The sequence spans 85 residues: Putative membrane protein insertion efficiency factor (85 aa).

Residues 62 to 85 form a disordered region; that stretch reads KGGFDPVPLKKDKSASKHSHKHNH.

This sequence belongs to the UPF0161 family.

It is found in the cell membrane. Functionally, could be involved in insertion of integral membrane proteins into the membrane. The sequence is that of Putative membrane protein insertion efficiency factor from Staphylococcus aureus (strain Mu3 / ATCC 700698).